The primary structure comprises 376 residues: Zinc transporter 7 (376 aa).

Residues 1–37 lie on the Cytoplasmic side of the membrane; that stretch reads MLPLSIKDDEYKPPKFNLFGKISGWFRSILSDKTSRN. The chain crosses the membrane as a helical span at residues 38 to 58; that stretch reads LFFFLCLNLSFAFVELLYGIW. Residues 59-67 are Lumenal-facing; the sequence is SNCLGLISD. The chain crosses the membrane as a helical span at residues 68 to 88; it reads SFHMFFDSTAILAGLAASVIS. The Cytoplasmic portion of the chain corresponds to 89–102; it reads KWRDNDAFSYGYVR. The helical transmembrane segment at 103-123 threads the bilayer; that stretch reads AEVLAGFVNGLFLIFTAFFIF. At 124-140 the chain is on the lumenal side; it reads SEGVERALAPPDVHHER. Residues 141–161 form a helical membrane-spanning segment; sequence LLLVSILGFVVNLIGIFVFKH. A his-rich loop region spans residues 161 to 218; that stretch reads HGGHGHSHGSGHGHSHSLFNGALDQAHGHVDHCHSHEVKHGAAHSHDHAHGHGHFHSH. Residues 162 to 236 lie on the Cytoplasmic side of the membrane; sequence GGHGHSHGSG…TGPSRQILQG (75 aa). Over residues 194 to 222 the composition is skewed to basic and acidic residues; it reads HSHEVKHGAAHSHDHAHGHGHFHSHDGPS. Residues 194–226 form a disordered region; the sequence is HSHEVKHGAAHSHDHAHGHGHFHSHDGPSLKET. A helical membrane pass occupies residues 237–257; it reads VFLHILADTLGSIGVIASAIM. At 258–262 the chain is on the lumenal side; sequence MQNFG. A helical transmembrane segment spans residues 263–283; the sequence is LMIADPICSILIAILIVVSVI. At 284–376 the chain is on the cytoplasmic side; that stretch reads PLLRESVGIL…LYVQIDFAAM (93 aa).

This sequence belongs to the cation diffusion facilitator (CDF) transporter (TC 2.A.4) family. SLC30A subfamily. In terms of assembly, homooligomer. In terms of tissue distribution, highly expressed in megakaryocytes and other bone marrow cells and in the epithelium of the small intestine. Expressed in testis (in Leydig cells), adrenal gland (in adrenal medula, zona fasciculata and zona of reticularis), and pituitary gland (in somatotropic cells).

Its subcellular location is the golgi apparatus membrane. The protein localises to the cytoplasmic vesicle. It is found in the golgi apparatus. It localises to the trans-Golgi network. The protein resides in the sarcoplasmic reticulum. Its subcellular location is the mitochondrion. The catalysed reaction is Zn(2+)(in) = Zn(2+)(out). In terms of biological role, zinc ion transporter mediating zinc entry from the cytosol into the lumen of organelles along the secretory pathway. By contributing to zinc ion homeostasis within the early secretory pathway, regulates the activation and folding of enzymes like alkaline phosphatases. This is Zinc transporter 7 from Homo sapiens (Human).